Here is a 370-residue protein sequence, read N- to C-terminus: Phospho-2-dehydro-3-deoxyheptonate aldolase, tyrosine-inhibited (370 aa).

Ser-2 carries the N-acetylserine modification.

It belongs to the class-I DAHP synthase family.

The catalysed reaction is D-erythrose 4-phosphate + phosphoenolpyruvate + H2O = 7-phospho-2-dehydro-3-deoxy-D-arabino-heptonate + phosphate. It participates in metabolic intermediate biosynthesis; chorismate biosynthesis; chorismate from D-erythrose 4-phosphate and phosphoenolpyruvate: step 1/7. With respect to regulation, inhibited by tyrosine. Stereospecific condensation of phosphoenolpyruvate (PEP) and D-erythrose-4-phosphate (E4P) giving rise to 3-deoxy-D-arabino-heptulosonate-7-phosphate (DAHP). The chain is Phospho-2-dehydro-3-deoxyheptonate aldolase, tyrosine-inhibited (ARO4) from Saccharomyces cerevisiae (strain ATCC 204508 / S288c) (Baker's yeast).